The following is a 568-amino-acid chain: Dihydroxy-acid dehydratase (568 aa).

A [2Fe-2S] cluster-binding site is contributed by cysteine 59. Aspartate 91 contributes to the Mg(2+) binding site. Position 132 (cysteine 132) interacts with [2Fe-2S] cluster. Aspartate 133 and lysine 134 together coordinate Mg(2+). Lysine 134 is modified (N6-carboxylysine). Position 204 (cysteine 204) interacts with [2Fe-2S] cluster. Glutamate 456 contacts Mg(2+). The Proton acceptor role is filled by serine 482.

It belongs to the IlvD/Edd family. In terms of assembly, homodimer. The cofactor is [2Fe-2S] cluster. It depends on Mg(2+) as a cofactor.

It carries out the reaction (2R)-2,3-dihydroxy-3-methylbutanoate = 3-methyl-2-oxobutanoate + H2O. The catalysed reaction is (2R,3R)-2,3-dihydroxy-3-methylpentanoate = (S)-3-methyl-2-oxopentanoate + H2O. It participates in amino-acid biosynthesis; L-isoleucine biosynthesis; L-isoleucine from 2-oxobutanoate: step 3/4. It functions in the pathway amino-acid biosynthesis; L-valine biosynthesis; L-valine from pyruvate: step 3/4. Functionally, functions in the biosynthesis of branched-chain amino acids. Catalyzes the dehydration of (2R,3R)-2,3-dihydroxy-3-methylpentanoate (2,3-dihydroxy-3-methylvalerate) into 2-oxo-3-methylpentanoate (2-oxo-3-methylvalerate) and of (2R)-2,3-dihydroxy-3-methylbutanoate (2,3-dihydroxyisovalerate) into 2-oxo-3-methylbutanoate (2-oxoisovalerate), the penultimate precursor to L-isoleucine and L-valine, respectively. This Verminephrobacter eiseniae (strain EF01-2) protein is Dihydroxy-acid dehydratase.